A 328-amino-acid chain; its full sequence is Biotin synthase (328 aa).

The Radical SAM core domain maps to 48-277 (FVGNEVHLCS…GKRITVCGGR (230 aa)). The [4Fe-4S] cluster site is built by Cys66, Cys70, and Cys73. Ser142 and Cys202 together coordinate [2Fe-2S] cluster.

This sequence belongs to the radical SAM superfamily. Biotin synthase family. As to quaternary structure, homodimer. It depends on [4Fe-4S] cluster as a cofactor. [2Fe-2S] cluster is required as a cofactor.

The enzyme catalyses (4R,5S)-dethiobiotin + (sulfur carrier)-SH + 2 reduced [2Fe-2S]-[ferredoxin] + 2 S-adenosyl-L-methionine = (sulfur carrier)-H + biotin + 2 5'-deoxyadenosine + 2 L-methionine + 2 oxidized [2Fe-2S]-[ferredoxin]. It participates in cofactor biosynthesis; biotin biosynthesis; biotin from 7,8-diaminononanoate: step 2/2. Catalyzes the conversion of dethiobiotin (DTB) to biotin by the insertion of a sulfur atom into dethiobiotin via a radical-based mechanism. This Citrifermentans bemidjiense (strain ATCC BAA-1014 / DSM 16622 / JCM 12645 / Bem) (Geobacter bemidjiensis) protein is Biotin synthase.